Here is a 197-residue protein sequence, read N- to C-terminus: Recombination protein RecR (197 aa).

A C4-type zinc finger spans residues Cys55–Cys70. The Toprim domain maps to Gln78–Pro173.

The protein belongs to the RecR family.

May play a role in DNA repair. It seems to be involved in an RecBC-independent recombinational process of DNA repair. It may act with RecF and RecO. The polypeptide is Recombination protein RecR (Xanthomonas euvesicatoria pv. vesicatoria (strain 85-10) (Xanthomonas campestris pv. vesicatoria)).